Reading from the N-terminus, the 112-residue chain is UPF0060 membrane protein IL2332 (112 aa).

4 helical membrane passes run 10 to 30 (LGLFFITAIAEIIGCYLPYLW), 36 to 56 (SAWLLIPAAISLAVFAWLLTL), 64 to 84 (VYAAYGGVYVVTALLWLKAVE), and 90 to 110 (TYDAVGAAFTLTGMAIIAVGW).

It belongs to the UPF0060 family.

Its subcellular location is the cell inner membrane. The sequence is that of UPF0060 membrane protein IL2332 from Idiomarina loihiensis (strain ATCC BAA-735 / DSM 15497 / L2-TR).